The sequence spans 309 residues: Homoserine kinase (309 aa).

91–101 provides a ligand contact to ATP; the sequence is PIGSGLGSSAC.

Belongs to the GHMP kinase family. Homoserine kinase subfamily.

It localises to the cytoplasm. It catalyses the reaction L-homoserine + ATP = O-phospho-L-homoserine + ADP + H(+). The protein operates within amino-acid biosynthesis; L-threonine biosynthesis; L-threonine from L-aspartate: step 4/5. Catalyzes the ATP-dependent phosphorylation of L-homoserine to L-homoserine phosphate. The sequence is that of Homoserine kinase from Serratia proteamaculans (strain 568).